A 406-amino-acid polypeptide reads, in one-letter code: Multifunctional CCA protein (406 aa).

Residues Gly8 and Arg11 each coordinate ATP. CTP is bound by residues Gly8 and Arg11. Positions 21 and 23 each coordinate Mg(2+). ATP contacts are provided by Arg91, Arg137, and Arg140. Arg91, Arg137, and Arg140 together coordinate CTP. One can recognise an HD domain in the interval 228 to 329 (TGIHTLMVAE…IKILNKFDVW (102 aa)).

This sequence belongs to the tRNA nucleotidyltransferase/poly(A) polymerase family. Bacterial CCA-adding enzyme type 1 subfamily. Monomer. Can also form homodimers and oligomers. It depends on Mg(2+) as a cofactor. The cofactor is Ni(2+).

The enzyme catalyses a tRNA precursor + 2 CTP + ATP = a tRNA with a 3' CCA end + 3 diphosphate. The catalysed reaction is a tRNA with a 3' CCA end + 2 CTP + ATP = a tRNA with a 3' CCACCA end + 3 diphosphate. In terms of biological role, catalyzes the addition and repair of the essential 3'-terminal CCA sequence in tRNAs without using a nucleic acid template. Adds these three nucleotides in the order of C, C, and A to the tRNA nucleotide-73, using CTP and ATP as substrates and producing inorganic pyrophosphate. tRNA 3'-terminal CCA addition is required both for tRNA processing and repair. Also involved in tRNA surveillance by mediating tandem CCA addition to generate a CCACCA at the 3' terminus of unstable tRNAs. While stable tRNAs receive only 3'-terminal CCA, unstable tRNAs are marked with CCACCA and rapidly degraded. The protein is Multifunctional CCA protein of Vibrio parahaemolyticus serotype O3:K6 (strain RIMD 2210633).